The sequence spans 137 residues: Large ribosomal subunit protein uL16 (137 aa).

Belongs to the universal ribosomal protein uL16 family. In terms of assembly, part of the 50S ribosomal subunit.

In terms of biological role, binds 23S rRNA and is also seen to make contacts with the A and possibly P site tRNAs. The sequence is that of Large ribosomal subunit protein uL16 from Endomicrobium trichonymphae.